The following is an 868-amino-acid chain: Translation initiation factor IF-2 (868 aa).

2 disordered regions span residues 158 to 178 (VKEEEKINSEENTAESQDELT) and 200 to 269 (KKEE…KYRE). Residues 200 to 209 (KKEEVKPEKV) show a composition bias toward basic and acidic residues. The span at 249–260 (RGGRSKFKKKKG) shows a compositional bias: basic residues. Positions 368–537 (GRAPVVTIMG…LLQSEVLELK (170 aa)) constitute a tr-type G domain. The interval 377 to 384 (GHVDHGKT) is G1. Residue 377–384 (GHVDHGKT) coordinates GTP. The tract at residues 402-406 (GITQH) is G2. The G3 stretch occupies residues 423-426 (DTPG). GTP is bound by residues 423-427 (DTPGH) and 477-480 (NKMD). The tract at residues 477-480 (NKMD) is G4. The G5 stretch occupies residues 513-515 (SAK).

Belongs to the TRAFAC class translation factor GTPase superfamily. Classic translation factor GTPase family. IF-2 subfamily.

It is found in the cytoplasm. In terms of biological role, one of the essential components for the initiation of protein synthesis. Protects formylmethionyl-tRNA from spontaneous hydrolysis and promotes its binding to the 30S ribosomal subunits. Also involved in the hydrolysis of GTP during the formation of the 70S ribosomal complex. This Legionella pneumophila (strain Lens) protein is Translation initiation factor IF-2.